The following is a 625-amino-acid chain: Glutamyl-tRNA(Gln) amidotransferase subunit E (625 aa).

It belongs to the GatB/GatE family. GatE subfamily. In terms of assembly, heterodimer of GatD and GatE.

It catalyses the reaction L-glutamyl-tRNA(Gln) + L-glutamine + ATP + H2O = L-glutaminyl-tRNA(Gln) + L-glutamate + ADP + phosphate + H(+). Allows the formation of correctly charged Gln-tRNA(Gln) through the transamidation of misacylated Glu-tRNA(Gln) in organisms which lack glutaminyl-tRNA synthetase. The reaction takes place in the presence of glutamine and ATP through an activated gamma-phospho-Glu-tRNA(Gln). The GatDE system is specific for glutamate and does not act on aspartate. This Caldivirga maquilingensis (strain ATCC 700844 / DSM 13496 / JCM 10307 / IC-167) protein is Glutamyl-tRNA(Gln) amidotransferase subunit E.